Here is a 113-residue protein sequence, read N- to C-terminus: Integration host factor subunit alpha (113 aa).

The disordered stretch occupies residues 87 to 113 (NALNGEVSDETTEGADDDDDEEGEGDE). Over residues 93-113 (VSDETTEGADDDDDEEGEGDE) the composition is skewed to acidic residues.

This sequence belongs to the bacterial histone-like protein family. Heterodimer of an alpha and a beta chain.

Its function is as follows. This protein is one of the two subunits of integration host factor, a specific DNA-binding protein that functions in genetic recombination as well as in transcriptional and translational control. The chain is Integration host factor subunit alpha from Anaeromyxobacter dehalogenans (strain 2CP-1 / ATCC BAA-258).